The following is a 57-amino-acid chain: Large ribosomal subunit protein bL32 (57 aa).

The protein belongs to the bacterial ribosomal protein bL32 family.

The chain is Large ribosomal subunit protein bL32 from Lysinibacillus sphaericus (strain C3-41).